Consider the following 525-residue polypeptide: G-protein regulator 1 (525 aa).

Residues 424–445 enclose the GoLoco domain; sequence PVDMMDLIFSMSSRMDDQRTEL. The tract at residues 488–525 is disordered; sequence HTMNRILKRSKKSKSSLDSTNSMQGDDTRSDDVTMTSK.

Interacts with gpr-1, lin-5 and GDP-bound goa-1.

The protein localises to the cytoplasm. Its subcellular location is the cell cortex. It is found in the cytoskeleton. It localises to the spindle. Functionally, in the 1-cell embryo, probably together with gpr-2, controls nuclear rotation and spindle elongation during mitosis. Complex of gpr-1 and gpr-2, in association with lin-5, activates G-protein signaling to affect mitotic spindle force. Polarity determinants (par genes) may regulate lin-5/gpr-1/gpr-2/goa-1 locally to create the asymmetric forces that drive spindle movement. The sequence is that of G-protein regulator 1 (gpr-1) from Caenorhabditis elegans.